A 337-amino-acid polypeptide reads, in one-letter code: MTLQIGVIGCGAIGQDHIRRLTRTLSGARVVAVNDIDPQQARDAVTKYGLDAEIYGDGHEVVAAADVQAVLVTSWGPTHEAFVLDAIAHGKPVFCEKPLAVTAEGCMRIVEAEVAHGKRLVQVGFMRPYDEGYRALKRVIDSGQIGAPLMLHCAHRNQSVGERYTTDMAITDTLIHELDVLRWLLGEDYASAQVVYPKKTRHASAHLADPQIVLLETASGVRIDVEIFVNCQYGYDIQCEVVGEQGIAKLPDPPAVGLKHAARQSVEIMTDWKERFIASYDVELQAFIDGVRQGALTGPSAWDGYAAAVAADACVRAQQSGAVEPIAMAERPAFYRG.

The protein belongs to the Gfo/Idh/MocA family. In terms of assembly, homotetramer.

The catalysed reaction is myo-inositol + NAD(+) = scyllo-inosose + NADH + H(+). Its function is as follows. Involved in the oxidation of myo-inositol (MI) to 2-keto-myo-inositol (2KMI or 2-inosose). This is Inositol 2-dehydrogenase from Burkholderia cenocepacia (strain HI2424).